The sequence spans 418 residues: D-inositol 3-phosphate glycosyltransferase (418 aa).

A 1D-myo-inositol 3-phosphate-binding site is contributed by histidine 9. UDP-N-acetyl-alpha-D-glucosamine is bound by residues glutamine 15–proline 16 and glycine 23. Residues aspartate 20–asparagine 25, lysine 78, tyrosine 110, threonine 134, and arginine 154 each bind 1D-myo-inositol 3-phosphate. Positions 231, 236, and 294 each coordinate UDP-N-acetyl-alpha-D-glucosamine. Residues tyrosine 303, arginine 304, and alanine 306 each contribute to the Mg(2+) site. The UDP-N-acetyl-alpha-D-glucosamine site is built by glutamate 316 and glutamate 324. Residue threonine 330 participates in Mg(2+) binding.

Belongs to the glycosyltransferase group 1 family. MshA subfamily. In terms of assembly, homodimer.

It carries out the reaction 1D-myo-inositol 3-phosphate + UDP-N-acetyl-alpha-D-glucosamine = 1D-myo-inositol 2-acetamido-2-deoxy-alpha-D-glucopyranoside 3-phosphate + UDP + H(+). In terms of biological role, catalyzes the transfer of a N-acetyl-glucosamine moiety to 1D-myo-inositol 3-phosphate to produce 1D-myo-inositol 2-acetamido-2-deoxy-glucopyranoside 3-phosphate in the mycothiol biosynthesis pathway. The chain is D-inositol 3-phosphate glycosyltransferase from Corynebacterium glutamicum (strain R).